A 602-amino-acid chain; its full sequence is Zinc finger protein 652-B (602 aa).

Residues 60-232 form a disordered region; the sequence is FQDSKPTNEV…PSDKAKSEEK (173 aa). The segment covering 65–79 has biased composition (basic and acidic residues); that stretch reads PTNEVHAVKGERENS. Composition is skewed to acidic residues over residues 80–108 and 148–167; these read GESEEEEDEDDDDDDDDDDDDEEGEDEDE and DDEGGDSGEDDQDSHEDEEN. Residues 222–232 show a composition bias toward basic and acidic residues; it reads SPSDKAKSEEK. A C2H2-type 1 zinc finger spans residues 235-258; it reads LTCDKCPRVFNTRWYLEKHMNVTH. A C2H2-type 2; degenerate zinc finger spans residues 262–284; that stretch reads QICDKCGKKFVLESELSLHLQTD. C2H2-type zinc fingers lie at residues 289-312, 319-341, 347-369, 375-397, 403-425, and 431-453; these read IQCITCNKTFKKLWSLHEHIKIVH, FSCEICEKKFYTMAHVRKHLVAH, FTCETCGKSFKRSMSLKVHSLQH, FRCENCDERFQYKYQLRSHMSIH, FMCQWCGKDFNMKQYFDEHMKTH, and FICEICGKSFTSRPNMKRHRRTH. The segment at 459–482 adopts a C2H2-type 9; degenerate zinc-finger fold; the sequence is YPCDVCGMRFRFSNMLKAHKEKCF. The segment at 543–575 is disordered; the sequence is PFSHLHLHPHSHTHHLAVPPVPHLPPPPALFKS. A compositionally biased stretch (basic residues) spans 545–557; sequence SHLHLHPHSHTHH. The span at 561 to 571 shows a compositional bias: pro residues; it reads PPVPHLPPPPA.

This sequence belongs to the krueppel C2H2-type zinc-finger protein family.

Its subcellular location is the nucleus. May be involved in transcriptional regulation. The chain is Zinc finger protein 652-B (znf652-b) from Xenopus laevis (African clawed frog).